Reading from the N-terminus, the 122-residue chain is Large ribosomal subunit protein uL14c (122 aa).

Belongs to the universal ribosomal protein uL14 family. As to quaternary structure, part of the 50S ribosomal subunit.

Its subcellular location is the plastid. It localises to the chloroplast. Its function is as follows. Binds to 23S rRNA. In Manihot esculenta (Cassava), this protein is Large ribosomal subunit protein uL14c.